Here is a 115-residue protein sequence, read N- to C-terminus: Promotilin (115 aa).

The signal sequence occupies residues 1–25; sequence MLSRKATAVLLAVHAAAMLASQTEA. Positions 43-72 are disordered; it reads RYKGQKKSLSVQQRSEEVGPVDPTEPWEEK.

Belongs to the motilin family.

The protein localises to the secreted. Its function is as follows. Plays an important role in the regulation of interdigestive gastrointestinal motility and indirectly causes rhythmic contraction of duodenal and colonic smooth muscle. The sequence is that of Promotilin (MLN) from Bos taurus (Bovine).